The sequence spans 323 residues: tRNA dimethylallyltransferase (323 aa).

18 to 25 serves as a coordination point for ATP; sequence GPTASGKS. 20–25 contacts substrate; it reads TASGKS. 3 interaction with substrate tRNA regions span residues 43-46, 167-171, and 249-254; these read DSAQ, QRIQR, and RCVGYR.

It belongs to the IPP transferase family. Monomer. It depends on Mg(2+) as a cofactor.

It catalyses the reaction adenosine(37) in tRNA + dimethylallyl diphosphate = N(6)-dimethylallyladenosine(37) in tRNA + diphosphate. Functionally, catalyzes the transfer of a dimethylallyl group onto the adenine at position 37 in tRNAs that read codons beginning with uridine, leading to the formation of N6-(dimethylallyl)adenosine (i(6)A). In Nitrosospira multiformis (strain ATCC 25196 / NCIMB 11849 / C 71), this protein is tRNA dimethylallyltransferase.